The following is a 281-amino-acid chain: MNQNQLISVEDIVFRYRKDAERRALDGVSLQVYEGEWLAIVGHNGSGKSTLARALNGLILPESGDIEVAGIQLTEESVWEVRKKIGMVFQNPDNQFVGTTVRDDVAFGLENNGVPREEMIERVDWAVKQVNMQDFLDQEPHHLSGGQKQRVAIAGVIAARPDIIILDEATSMLDPIGREEVLETVRHLKEQGMATVISITHDLNEAAKADRIIVMNGGKKYAEGPPEEIFKLNKELVRIGLDLPFSFQLSQLLRENGLALEENHLTQEGLVKELWTLQSKM.

An ABC transporter domain is found at 7-242 (ISVEDIVFRY…NKELVRIGLD (236 aa)). ATP is bound at residue 42 to 49 (GHNGSGKS). Glutamate 168 (proton acceptor) is an active-site residue.

The protein belongs to the ABC transporter superfamily. Energy-coupling factor EcfA family. Forms a stable energy-coupling factor (ECF) transporter complex composed of 2 membrane-embedded substrate-binding proteins (S component), 2 ATP-binding proteins (A component) and 2 transmembrane proteins (T component).

The protein resides in the cell membrane. In terms of biological role, ATP-binding (A) component of a common energy-coupling factor (ECF) ABC-transporter complex. Unlike classic ABC transporters this ECF transporter provides the energy necessary to transport a number of different substrates. This Bacillus subtilis (strain 168) protein is Energy-coupling factor transporter ATP-binding protein EcfA1.